An 821-amino-acid polypeptide reads, in one-letter code: Pentatricopeptide repeat-containing protein At4g04790, mitochondrial (821 aa).

The transit peptide at 1 to 74 (MVVSKVNKSL…KLLHVTTSDK (74 aa)) directs the protein to the mitochondrion. PPR repeat units follow at residues 372–406 (SSTS…GLMI), 407–441 (SADI…SVKP), 442–476 (NTEN…NLEP), 477–511 (NSSM…GVKP), 512–542 (DSIT…AGVQ), 544–574 (TKRI…PDVP), and 578–612 (QNEL…ECHV). The interval 801–821 (AFSQAPNKKKPKKKMIVLSTK) is disordered.

Belongs to the PPR family. P subfamily.

The protein localises to the mitochondrion. The chain is Pentatricopeptide repeat-containing protein At4g04790, mitochondrial from Arabidopsis thaliana (Mouse-ear cress).